Consider the following 701-residue polypeptide: MSAKDPKVVADLKYTRNIGIMAHIDAGKTTTTERILYYTGKSHKIGEVHDGDATMDWMVQEQERGITITSAATMAFWKDHRINIIDTPGHVDFTIEVERSLRVLDGAIAVFDGVNGVEPQSETVWKQADKYKVPRICFVNKMDRVGADFVMSFGTIKEKLNANPIPVQVPIGMEDTFRGVVDLLENKAYMWDQSGMGDHFEITDVPNDMKEEVNRFRTEVIEKIVEFEDELLEKYLNGEEVTVPELKRALRKGTLELKAFPVFCGAAFKNKGVQPLLDGVIDYLPSPLEVPAIVGHDPERPDKEIICKTEFDAHAAALAFKIANDPFAGTLTYIRVYSGEVKVGEQLLNPRTQKKERIQKLVKMHANSREEINSLKAGDIGAVIGLKFTGTGDTLCESSHAVVLETITFPEPVISVAVEAKSSADQEKMLAGLAKLEKEDPSCRLRTDPETGQILLSGMGELHLEILVDRLLREHKIQANVGKPQVSYRETITVAAKAEHVYEREIAGETHFAKVSLSIEPISQADGIQFISKVAVSKEFTAPMLKAAESGFREAAEVGPLASCSMLGIKGTLNSVEVRPDSSSEMAFKAAASLAFRDAVKAASVELLEPIFKLEVTCPDDFVGNIVGDLNARRGKILAMNVKQGGGQVISAEAPLASLFGYATDVRSLSQGRASFSMEFLEYAIVPAKVKTDILHKMGRY.

In terms of domain architecture, tr-type G spans 13–288; sequence KYTRNIGIMA…GVIDYLPSPL (276 aa). GTP contacts are provided by residues 22–29, 86–90, and 140–143; these read AHIDAGKT, DTPGH, and NKMD.

Belongs to the TRAFAC class translation factor GTPase superfamily. Classic translation factor GTPase family. EF-G/EF-2 subfamily.

Its subcellular location is the cytoplasm. Its function is as follows. Catalyzes the GTP-dependent ribosomal translocation step during translation elongation. During this step, the ribosome changes from the pre-translocational (PRE) to the post-translocational (POST) state as the newly formed A-site-bound peptidyl-tRNA and P-site-bound deacylated tRNA move to the P and E sites, respectively. Catalyzes the coordinated movement of the two tRNA molecules, the mRNA and conformational changes in the ribosome. This chain is Elongation factor G 1, found in Bdellovibrio bacteriovorus (strain ATCC 15356 / DSM 50701 / NCIMB 9529 / HD100).